We begin with the raw amino-acid sequence, 339 residues long: DNA-directed RNA polymerase subunit alpha (339 aa).

The alpha N-terminal domain (alpha-NTD) stretch occupies residues 1–235; sequence MVIQKNWQEL…DQLQIFVNFE (235 aa). Residues 251-339 form an alpha C-terminal domain (alpha-CTD) region; sequence FNPALLKKVD…DLAKRFEEHY (89 aa).

It belongs to the RNA polymerase alpha chain family. Homodimer. The RNAP catalytic core consists of 2 alpha, 1 beta, 1 beta' and 1 omega subunit. When a sigma factor is associated with the core the holoenzyme is formed, which can initiate transcription.

It carries out the reaction RNA(n) + a ribonucleoside 5'-triphosphate = RNA(n+1) + diphosphate. Functionally, DNA-dependent RNA polymerase catalyzes the transcription of DNA into RNA using the four ribonucleoside triphosphates as substrates. This Methylobacterium sp. (strain 4-46) protein is DNA-directed RNA polymerase subunit alpha.